The chain runs to 784 residues: MNLSLCIASPLLTKSSRPTALSAIHTASTSHGGQTNPTNLIIDTTKERIQKLFKNVEISVSSYDTAWVAMVPSPNSPKSPCFPECLNWLINNQLNDGSWGLVNHTHNHNHPLLKDSLSSTLACIVALKRWNVGEDQINKGLSFIESNLASATDKSQPSPIGFDIIFPGLLEYAKNLDINLLSKQTDFSLMLHKRELEQKRCHSNEIDGYLAYISEGLGNLYDWNMVKKYQMKNGSVFNSPSATAAAFINHQNPGCLNYLNSLLDKFGNAVPTVYPLDLYIRLSMVDTIERLGISHHFRVEIKNVLDETYRCWVERDEQIFMDVVTCALAFRLLRIHGYKVSPDQLAEITNELAFKDEYAALETYHASQILYQEDLSSGKQILKSADFLKGILSTDSNRLSKLIHKEVENALKFPINTGLERINTRRNIQLYNVDNTRILKTTYHSSNISNTYYLRLAVEDFYTCQSIYREELKGLERWVVQNKLDQLKFARQKTAYCYFSVAATLSSPELSDARISWAKNGILTTVVDDFFDIGGTIDELTNLIQCVEKWNVDVDKDCCSEHVRILFLALKDAICWIGDEAFKWQARDVTSHVIQTWLELMNSMLREAIWTRDAYVPTLNEYMENAYVSFALGPIVKPAIYFVGPKLSEEIVESSEYHNLFKLMSTQGRLLNDIHSFKREFKEGKLNAVALHLSNGESGKVEEEVVEEMMMMIKNKRKELMKLIFEENGSIVPRACKDAFWNMCHVLNFFYANDDGFTGNTILDTVKDIIYNPLVLVNENEEQR.

Residues 1-28 (MNLSLCIASPLLTKSSRPTALSAIHTAS) constitute a chloroplast transit peptide. Residues D528, D532, N672, and E680 each coordinate Mg(2+). The DDXXD motif motif lies at 528–532 (DDFFD).

Belongs to the terpene synthase family. Requires Mg(2+) as cofactor. In terms of tissue distribution, accumulates in leaves.

The protein resides in the plastid. Its subcellular location is the chloroplast. The catalysed reaction is ent-copalyl diphosphate = ent-kaur-16-ene + diphosphate. It participates in secondary metabolite biosynthesis; terpenoid biosynthesis. Its pathway is plant hormone biosynthesis; gibberellin biosynthesis. Its function is as follows. Involved in the biosynthesis of ent-kaurene diterpenoids natural products such as oridonin, miltiradiene, eriocalyxin B and nezukol, known to exhibit antitumor, anti-inflammatory and antibacterial activities, and in the production of gibberellins phytohormones. Catalyzes the conversion of ent-copalyl diphosphate (ent-CPP) to ent-kaurene. The sequence is that of Ent-kaurene synthase 1, chloroplastic from Stevia rebaudiana (Stevia).